A 252-amino-acid chain; its full sequence is Maintenance of carboxysome distribution protein A (252 aa).

ATP-binding residues include glycine 11, glycine 12, glycine 14, lysine 15, threonine 16, threonine 17, glutamine 41, glutamate 147, lysine 151, phenylalanine 182, arginine 183, leucine 216, glutamate 217, and serine 218. Threonine 16 contributes to the Mg(2+) binding site.

This sequence belongs to the ParA family. McdA subfamily. Self-associates (probably a homodimer), interacts with McdB probably via the C-terminus of both proteins. Shows no signs of filament formation. Homodimerizes in the presence of ATP, making extra nucleotide contacts than with ADP or AMP-PNP. Each subunit binds 1 ATP molecule; Glu-147, Lys-151 and Arg-183 cross the dimer interface to contact ATP in the other subunit, while Phe-182, Arg-183 and Phe-221 stack with the adenine base in their own subunit.

It is found in the cytoplasm. Its subcellular location is the nucleoid. The enzyme catalyses ATP + H2O = ADP + phosphate + H(+). McdA and McdB together mediate carboxysome (Cb) spacing, size, ultrastructure and probably inheritance in the cell. Together they prevent Cb aggregation. McdA is an ATPase that forms dynamic gradients on the nucleoid in response to adapter protein McdB, which associates with carboxysomes. The interplay between McdA gradients on the nucleoid and McdB-bound carboxysomes result in the equal spacing of Cbs along the cell length. Binds nucleoid DNA in an ATP-dependent manner; neither ADP nor ATP-gamma-S support DNA binding. Upon ATP-binding dimerizes and binds nucleoid DNA; the (McdA-ATP)2 dimer transiently binds McdB-bound Cbs. McdA's ATPase activity is stimulated 2-fold by DNA and McdB; ATP hydrolysis causes McdA release from DNA. Overexpression leads to loss of McdA oscillation, diffuse nucleoid staining by McdA with formation of large carboxysome aggregates that are in regions depleted of McdA; McdA remains nucleoid-associated. Its function is as follows. Mutagenesis studies (characterized in vivo) suggest ATP binding, protein dimerization and a conformational change are necessary for nucleoid DNA-binding and binding to McdB-bound Cbs, which tethers Cbs to the nucleoid. Eventual McdB-stimulated ATP hydrolysis causes de-dimerization of McdA which no longer binds the nucleoid and releases McdB and Cbs. McdB-bound Cbs then move to a region of higher McdA concentration, distributing Cbs across the nucleoid. Functionally, incorrect positioning (aggregation) of carboxysomes results in reduced CO(2) fixation by encapsulated ribulose-1,5-bisphosphate carboxylase (RuBisCO, cbbL/cbbS), which leads to slower growth, cell elongation, asymmetric cell division and an increase in RuBisCO levels. This is Maintenance of carboxysome distribution protein A from Synechococcus elongatus (strain ATCC 33912 / PCC 7942 / FACHB-805) (Anacystis nidulans R2).